Consider the following 470-residue polypeptide: Heparan-sulfate 6-O-sulfotransferase 3 (470 aa).

Residues 1–4 (MDER) lie on the Cytoplasmic side of the membrane. The helical; Signal-anchor for type II membrane protein transmembrane segment at 5–27 (FNKWLLTPVLTLLFVVIMYQYVS) threads the bilayer. The Lumenal portion of the chain corresponds to 28-470 (PSCTSSCTNF…EDYNSQVVRW (443 aa)). The segment at 36–121 (NFGEQLRSGE…EAPENGSLPR (86 aa)) is disordered. A compositionally biased stretch (acidic residues) spans 88–113 (PEDEDEDPGDPEEEEEEEEEEPDPEA). N-linked (GlcNAc...) asparagine glycans are attached at residues Asn-116 and Asn-127. 151–159 (HIQKTGGTT) serves as a coordination point for 3'-phosphoadenylyl sulfate. Residues 181–182 (KK), Arg-198, Trp-203, and His-208 each bind substrate. Residue His-208 is the Proton acceptor of the active site. Asn-230 is a glycosylation site (N-linked (GlcNAc...) asparagine). 2 residues coordinate 3'-phosphoadenylyl sulfate: Arg-244 and Ser-252. 2 residues coordinate substrate: His-256 and Trp-263. N-linked (GlcNAc...) asparagine glycans are attached at residues Asn-323 and Asn-328. 376–378 (TQF) contributes to the 3'-phosphoadenylyl sulfate binding site. A glycan (N-linked (GlcNAc...) asparagine) is linked at Asn-379. A 3'-phosphoadenylyl sulfate-binding site is contributed by 382 to 383 (RA). A disordered region spans residues 421–453 (TKQLEHQRDRQKRREERRLQREHRAHRWPKEDR). A compositionally biased stretch (basic and acidic residues) spans 422–439 (KQLEHQRDRQKRREERRL).

Belongs to the sulfotransferase 6 family. As to expression, ubiquitously expressed.

It is found in the membrane. The enzyme catalyses alpha-D-glucosaminyl-[heparan sulfate](n) + 3'-phosphoadenylyl sulfate = 6-sulfo-alpha-D-glucosaminyl-[heparan sulfate](n) + adenosine 3',5'-bisphosphate + H(+). In terms of biological role, 6-O-sulfation enzyme which catalyzes the transfer of sulfate from 3'-phosphoadenosine 5'-phosphosulfate (PAPS) to position 6 of the N-sulfoglucosamine residue (GlcNS) of heparan sulfate. This chain is Heparan-sulfate 6-O-sulfotransferase 3 (Hs6st3), found in Mus musculus (Mouse).